A 347-amino-acid chain; its full sequence is NADH-quinone oxidoreductase subunit H (347 aa).

Transmembrane regions (helical) follow at residues Leu-13 to Ile-33, Pro-50 to Phe-70, Gly-82 to Ile-102, Val-115 to Gly-135, Ile-161 to Val-181, Phe-198 to Leu-218, Phe-248 to Ile-268, Val-286 to Val-306, and Leu-321 to Leu-341.

This sequence belongs to the complex I subunit 1 family. In terms of assembly, NDH-1 is composed of 14 different subunits. Subunits NuoA, H, J, K, L, M, N constitute the membrane sector of the complex.

It is found in the cell inner membrane. The catalysed reaction is a quinone + NADH + 5 H(+)(in) = a quinol + NAD(+) + 4 H(+)(out). In terms of biological role, NDH-1 shuttles electrons from NADH, via FMN and iron-sulfur (Fe-S) centers, to quinones in the respiratory chain. The immediate electron acceptor for the enzyme in this species is believed to be ubiquinone. Couples the redox reaction to proton translocation (for every two electrons transferred, four hydrogen ions are translocated across the cytoplasmic membrane), and thus conserves the redox energy in a proton gradient. This subunit may bind ubiquinone. The polypeptide is NADH-quinone oxidoreductase subunit H (Chelativorans sp. (strain BNC1)).